The primary structure comprises 390 residues: UDP-galactose translocator (390 aa).

The tract at residues 1-24 (MAAVGVGGSTAAAGAGAVSSGALE) is disordered. 10 consecutive transmembrane segments (helical) span residues 3–23 (AVGV…SGAL), 37–57 (YISL…IRYA), 65–85 (FFAT…CLLL), 97–117 (LVLF…KLAV), 140–160 (TFQV…VLML), 169–189 (WASL…QAGG), 200–220 (GAGL…GVYF), 238–258 (LGLF…GTAV), 269–289 (PAVW…AVVV), and 315–335 (LFGF…IGAV). The span at 9-22 (STAAAGAGAVSSGA) shows a compositional bias: low complexity. A disordered region spans residues 356–390 (PCIHQQPPGQPPPPQLSSRGDLTTEPFLPKSVLVK).

This sequence belongs to the nucleotide-sugar transporter family. SLC35A subfamily. In terms of assembly, interacts with SLC35A3; the interaction is reduced in the presence of SLC35A4. Found in a complex with SLC35A3 and SLC35A4.

It localises to the golgi apparatus membrane. It carries out the reaction UMP(out) + UDP-alpha-D-galactose(in) = UMP(in) + UDP-alpha-D-galactose(out). It catalyses the reaction UDP-N-acetyl-alpha-D-galactosamine(in) + UMP(out) = UDP-N-acetyl-alpha-D-galactosamine(out) + UMP(in). The catalysed reaction is UMP(out) + UDP-alpha-D-glucose(in) = UMP(in) + UDP-alpha-D-glucose(out). The enzyme catalyses UMP(out) + UDP-N-acetyl-alpha-D-glucosamine(in) = UMP(in) + UDP-N-acetyl-alpha-D-glucosamine(out). It carries out the reaction UDP-alpha-D-galactose(in) + AMP(out) = UDP-alpha-D-galactose(out) + AMP(in). It catalyses the reaction UDP-alpha-D-galactose(in) + CMP(out) = UDP-alpha-D-galactose(out) + CMP(in). The catalysed reaction is UDP-N-acetyl-alpha-D-galactosamine(out) + UDP-alpha-D-galactose(in) = UDP-N-acetyl-alpha-D-galactosamine(in) + UDP-alpha-D-galactose(out). The enzyme catalyses UDP-N-acetyl-alpha-D-glucosamine(out) + UDP-alpha-D-galactose(in) = UDP-N-acetyl-alpha-D-glucosamine(in) + UDP-alpha-D-galactose(out). It carries out the reaction UDP-alpha-D-galactose(in) + UDP-alpha-D-glucose(out) = UDP-alpha-D-galactose(out) + UDP-alpha-D-glucose(in). It catalyses the reaction UMP(out) + CMP(in) = UMP(in) + CMP(out). The catalysed reaction is UMP(out) + AMP(in) = UMP(in) + AMP(out). In terms of biological role, transports uridine diphosphate galactose (UDP-galactose) from the cytosol into the Golgi apparatus. It functions as an antiporter that exchanges UDP-galactose for UMP. It is also able to exchange UDP-galactose for AMP and CMP, and to transport UDP-N-acetylgalactosamine (UDP-GalNAc) and other nucleotide sugars. As a provider of UDP-galactose to galactosyltransferases present in the Golgi apparatus, it is necessary for globotriaosylceramide/globoside (Gb3Cer) synthesis from lactosylceramide. The sequence is that of UDP-galactose translocator from Mus musculus (Mouse).